The chain runs to 242 residues: Octanoyltransferase (242 aa).

The BPL/LPL catalytic domain occupies 31 to 206 (SQTTDEIWFL…LFLKNFGYNQ (176 aa)). Substrate is bound by residues 70–77 (RGGQVTYH), 137–139 (SIG), and 150–152 (GLA). The active-site Acyl-thioester intermediate is Cys-168.

Belongs to the LipB family.

The protein resides in the cytoplasm. It carries out the reaction octanoyl-[ACP] + L-lysyl-[protein] = N(6)-octanoyl-L-lysyl-[protein] + holo-[ACP] + H(+). The protein operates within protein modification; protein lipoylation via endogenous pathway; protein N(6)-(lipoyl)lysine from octanoyl-[acyl-carrier-protein]: step 1/2. Functionally, catalyzes the transfer of endogenously produced octanoic acid from octanoyl-acyl-carrier-protein onto the lipoyl domains of lipoate-dependent enzymes. Lipoyl-ACP can also act as a substrate although octanoyl-ACP is likely to be the physiological substrate. The sequence is that of Octanoyltransferase from Coxiella burnetii (strain CbuK_Q154) (Coxiella burnetii (strain Q154)).